A 682-amino-acid chain; its full sequence is Methionine--tRNA ligase (682 aa).

The short motif at 15 to 25 (PYANGAIHLGH) is the 'HIGH' region element. Zn(2+) contacts are provided by C146, C149, C159, and C162. Residues 331–335 (KMSKS) carry the 'KMSKS' region motif. K334 lines the ATP pocket. Residues 580 to 682 (DLAKLDMRVA…NGVTAGMQVK (103 aa)) form the tRNA-binding domain.

Belongs to the class-I aminoacyl-tRNA synthetase family. MetG type 1 subfamily. As to quaternary structure, homodimer. Requires Zn(2+) as cofactor.

It localises to the cytoplasm. The enzyme catalyses tRNA(Met) + L-methionine + ATP = L-methionyl-tRNA(Met) + AMP + diphosphate. Functionally, is required not only for elongation of protein synthesis but also for the initiation of all mRNA translation through initiator tRNA(fMet) aminoacylation. This is Methionine--tRNA ligase from Haemophilus influenzae (strain 86-028NP).